The primary structure comprises 1096 residues: Protein EMBRYONIC FLOWER 1 (1096 aa).

8 disordered regions span residues lysine 155–asparagine 189, lysine 274–arginine 296, glycine 315–glutamine 348, glutamate 366–valine 420, leucine 563–methionine 612, aspartate 629–leucine 651, aspartate 1007–serine 1032, and phenylalanine 1070–alanine 1096. Short sequence motifs (nuclear localization signal) lie at residues serine 170–glutamate 177 and isoleucine 281–leucine 288. A compositionally biased stretch (basic and acidic residues) spans isoleucine 281–arginine 294. Positions glycine 315–serine 337 are enriched in polar residues. The tract at residues serine 337–leucine 617 is DNA-binding. A compositionally biased stretch (basic and acidic residues) spans glycine 371–lysine 381. Positions arginine 382–aspartate 394 are enriched in polar residues. The segment covering serine 572–threonine 601 has biased composition (basic and acidic residues). Residues leucine 866 to alanine 1096 form a DNA-binding region. Polar residues predominate over residues serine 1018–serine 1032. The Nuclear localization signal 3 motif lies at lysine 1071 to lysine 1078.

Interacts with MSI1. Expressed in mature embryo, root tips, cotyledons, leaves, stems, shoot apex, and flower clusters, with highest levels in flowers. The presence in the shoot apical meristem (SAM) is required to maintain vegetative development and prevent early flowering.

Its subcellular location is the nucleus. Transcription repressor that regulates phase transition during shoot, flower and seeds development. Controls leaves development, shoot architecture and flowering by delaying both the vegetative to reproductive transition and flower initiation. Participates in polycomb group (PcG) protein complex-mediated (including EMF2) silencing of the flower homeotic genes AGAMOUS (AG), PISTILLATA (PI), and APETALA3 (AP3), as well as of some regulatory genes such as ABSCISIC ACID INSENSITIVE3 (ABI3), LONG VEGETATIVE PHASE1 (LOV1), and FLOWERING LOCUS C (FLC) during vegetative development. Required for histone methylation or for maintaining a stable histone methylation (e.g. H3K27me3) pattern of repressed target genes (including genes involved in salt stress response and flower development); this repression is counteracted by ULT1. Can bind non specifically DNA (both double- and single-stranded) and RNA. The protein is Protein EMBRYONIC FLOWER 1 of Arabidopsis thaliana (Mouse-ear cress).